A 490-amino-acid chain; its full sequence is Hippocampus abundant transcript 1 protein (490 aa).

Residue Met1 is modified to N-acetylmethionine. Topologically, residues 1-40 (MTQGKKKKRAANRSIMLAKKIIIKDGGTPQGIGSPSVYHA) are extracellular. Asn12 carries an N-linked (GlcNAc...) asparagine glycan. Residues 41–61 (VIVIFLEFFAWGLLTAPTLVV) traverse the membrane as a helical segment. Over 62–74 (LHETFPKHTFLMN) the chain is Cytoplasmic. The chain crosses the membrane as a helical span at residues 75-95 (GLIQGVKGLLSFLSAPLIGAL). The Extracellular segment spans residues 96–103 (SDVWGRKS). The chain crosses the membrane as a helical span at residues 104–124 (FLLLTVFFTCAPIPLMKISPW). Topologically, residues 125-126 (WY) are cytoplasmic. The chain crosses the membrane as a helical span at residues 127-147 (FAVISVSGVFAVTFSVVFAYV). Over 148–160 (ADITQEHERSMAY) the chain is Extracellular. The chain crosses the membrane as a helical span at residues 161-181 (GLVSATFAASLVTSPAIGAYL). Over 182–188 (GRVYGDS) the chain is Cytoplasmic. A helical transmembrane segment spans residues 189-209 (LVVVLATAIALLDICFILVAV). At 210-243 (PESLPEKMRPASWGAPISWEQADPFASLKKVGQD) the chain is on the extracellular side. A helical transmembrane segment spans residues 244–264 (SIVLLICITVFLSYLPEAGQY). Topologically, residues 265 to 284 (SSFFLYLRQIMKFSPESVAA) are cytoplasmic. A helical membrane pass occupies residues 285-305 (FIAVLGILSIIAQTIVLSLLM). The Extracellular segment spans residues 306 to 313 (RSIGNKNT). The chain crosses the membrane as a helical span at residues 314–334 (ILLGLGFQILQLAWYGFGSEP). The Cytoplasmic segment spans residues 335 to 337 (WMM). Residues 338 to 358 (WAAGAVAAMSSITFPAVSALV) traverse the membrane as a helical segment. Residues 359–379 (SRTADADQQGVVQGMITGIRG) are Extracellular-facing. A helical transmembrane segment spans residues 380–400 (LCNGLGPALYGFIFYIFHVEL). The Cytoplasmic segment spans residues 401 to 427 (KELPITGTDLGTNTSPQHHFEQNSIIP). A helical membrane pass occupies residues 428-448 (GPPFLFGACSVLLALLVALFI). The Extracellular segment spans residues 449-490 (PEHTNLSLRSSSWRKHCGSHSHPHNTQAPGEAKEPLLQDTNV). Asn453 carries an N-linked (GlcNAc...) asparagine glycan. The interval 465–490 (CGSHSHPHNTQAPGEAKEPLLQDTNV) is disordered.

Belongs to the major facilitator superfamily.

It is found in the membrane. This is Hippocampus abundant transcript 1 protein from Homo sapiens (Human).